We begin with the raw amino-acid sequence, 389 residues long: MKLALIGIGQAGGKVVDALVDYERRTKTGFVVDAIAVNSARADLRGLRTAPESRQVLVGLTRVKGHGVGADNELGAEVIAEDVGEVLSMIDDLPVHEIDAFLVVAGLGGGTGSGGAPVIARELKHIYTEPVYGLGILPARDEGGIYTLNAARSFQTFVREVDNLIVFDNDAWRKTGESLEAGYGSLNAELARRLGVLFSAGEGDGSGAVAESVVDASEIINTLGSGGVSTIGYAAVELDRPKRGLLSRLSGGKAEADDGGDSTNRITSLVRRAALGRLTLPCEISGAERGLVVVAGPSDVLSRRGIERARTWLEDETGTMEIRGGDYPIDSNFVAAVVLLSGVYDVPRVKELQAVAIETQRDMLAKRESSAASLDDLVSTGDDRIEPLF.

Residues 10-14 (QAGGK), 110-112 (GTG), Glu-142, Asn-169, and Asn-187 each bind GTP.

Belongs to the CetZ family.

It is found in the cytoplasm. Its function is as follows. Involved in cell shape control. The polypeptide is Tubulin-like protein CetZ3 (Haloferax volcanii (strain ATCC 29605 / DSM 3757 / JCM 8879 / NBRC 14742 / NCIMB 2012 / VKM B-1768 / DS2) (Halobacterium volcanii)).